We begin with the raw amino-acid sequence, 205 residues long: SREBP regulating gene protein (205 aa).

Residues 1–16 (MALYVSMVWRKILRKR) are Cytoplasmic-facing. Residues 17 to 35 (WVLGVVFGLSLIYFLTSTF) form a helical membrane-spanning segment. Residues 36–205 (KQEERTVRDR…GESPPELLPI (170 aa)) are Lumenal-facing. A glycan (N-linked (GlcNAc...) asparagine) is linked at Asn67.

This sequence belongs to the SPRING family.

The protein resides in the golgi apparatus membrane. In terms of biological role, positively regulates hepatic SREBP signaling pathway by modulating the proper localization of SCAP (SREBP cleavage-activating protein) to the endoplasmic reticulum, thereby controlling the level of functional SCAP. This Xenopus laevis (African clawed frog) protein is SREBP regulating gene protein.